A 204-amino-acid polypeptide reads, in one-letter code: Copper-binding protein CutI (204 aa).

A signal peptide spans M1–A26. Cu(2+) is bound by residues H27 and E50. Residues H27–A178 are Extracellular-facing. The tract at residues P146–S176 is disordered. Residues H147–Q157 show a composition bias toward polar residues. Positions V158–E168 are enriched in basic and acidic residues. Residues L179–V199 traverse the membrane as a helical segment. The Cytoplasmic portion of the chain corresponds to K200–A204.

The protein resides in the cell membrane. Copper-binding protein that probably plays a role in copper homeostasis. May act as metallochaperone, possibly to facilitate copper uptake via the CutJ/YcnJ importer. Preferentially binds Cu in its oxidized Cu(II) state in a 1:1 stoichiometry. This chain is Copper-binding protein CutI, found in Bacillus subtilis (strain 168).